A 445-amino-acid polypeptide reads, in one-letter code: Phenylacetate-coenzyme A ligase (445 aa).

The protein belongs to the phenylacetyl-CoA ligase family. In terms of assembly, monomer.

It catalyses the reaction 2-phenylacetate + ATP + CoA = phenylacetyl-CoA + AMP + diphosphate. Its pathway is aromatic compound metabolism; phenylacetate degradation. Functionally, catalyzes the activation of phenylacetic acid (PA) to phenylacetyl-CoA (PA-CoA). Involved in the phenylalanine metabolism. This Thermus thermophilus (strain ATCC BAA-163 / DSM 7039 / HB27) protein is Phenylacetate-coenzyme A ligase.